A 218-amino-acid polypeptide reads, in one-letter code: MPMTLGYWDIRGLAHAIRLFLEYTDTSYEDKKYSMGDAPDYDRSQWLSEKFKLGLDFPNLPYLIDGSHKITQSNAILRYLGRKHNLCGETEEERIRVDVLENQAMDTRLQLAMVCYSPDFERKKPEYLEGLPEKMKLYSEFLGKQPWFAGNKITYVDFLVYDVLDQHRIFEPKCLDAFPNLKDFVARFEGLKKISDYMKSGRFLSKPIFAKMAFWNPK.

Residues 2-88 (PMTLGYWDIR…YLGRKHNLCG (87 aa)) enclose the GST N-terminal domain. 7–8 (YW) is a binding site for glutathione. Phosphoserine occurs at positions 27 and 44. Residues 43–46 (RSQW), lysine 50, 59–60 (NL), and 72–73 (QS) contribute to the glutathione site. Residues 90 to 214 (TEEERIRVDV…SKPIFAKMAF (125 aa)) form the GST C-terminal domain. Position 116 (tyrosine 116) interacts with substrate. Serine 117 bears the Phosphoserine mark.

Belongs to the GST superfamily. Mu family. Homodimer or heterodimer.

It localises to the cytoplasm. It carries out the reaction RX + glutathione = an S-substituted glutathione + a halide anion + H(+). It catalyses the reaction 11(S)-hydroxy-14(S),15(S)-epoxy-(5Z,8Z,12E)-eicosatrienoate + glutathione = (11S,15S)-dihydroxy-14(R)-S-glutathionyl-(5Z,8Z,12E)-eicosatrienoate. In terms of biological role, conjugation of reduced glutathione to a wide number of exogenous and endogenous hydrophobic electrophiles. Participates in the formation of novel hepoxilin regioisomers. The protein is Glutathione S-transferase Mu 2 of Rattus norvegicus (Rat).